Consider the following 101-residue polypeptide: Small ribosomal subunit protein bS18c (101 aa).

The span at 1–19 shows a compositional bias: basic residues; it reads MDKSKQPFRKSKRSFRRRL. The interval 1–26 is disordered; that stretch reads MDKSKQPFRKSKRSFRRRLPPIGSGD.

This sequence belongs to the bacterial ribosomal protein bS18 family. Part of the 30S ribosomal subunit.

The protein localises to the plastid. It localises to the chloroplast. The polypeptide is Small ribosomal subunit protein bS18c (Phalaenopsis aphrodite subsp. formosana (Moth orchid)).